Reading from the N-terminus, the 231-residue chain is Flagellar L-ring protein (231 aa).

The first 18 residues, 1–18 (MSRLLIVVSLSSAFALAG), serve as a signal peptide directing secretion. Residue Cys19 is the site of N-palmitoyl cysteine attachment. Cys19 carries the S-diacylglycerol cysteine lipid modification.

Belongs to the FlgH family. As to quaternary structure, the basal body constitutes a major portion of the flagellar organelle and consists of four rings (L,P,S, and M) mounted on a central rod.

It is found in the cell outer membrane. The protein localises to the bacterial flagellum basal body. Functionally, assembles around the rod to form the L-ring and probably protects the motor/basal body from shearing forces during rotation. The polypeptide is Flagellar L-ring protein (Stutzerimonas stutzeri (strain A1501) (Pseudomonas stutzeri)).